Reading from the N-terminus, the 236-residue chain is Small ribosomal subunit protein uS3 (236 aa).

The region spanning 39 to 107 (IRSYVLEELR…ETSLNIVEIR (69 aa)) is the KH type-2 domain. The disordered stretch occupies residues 214–236 (ASERRATEADQSGSSSNRRRENA).

Belongs to the universal ribosomal protein uS3 family. Part of the 30S ribosomal subunit. Forms a tight complex with proteins S10 and S14.

Functionally, binds the lower part of the 30S subunit head. Binds mRNA in the 70S ribosome, positioning it for translation. The protein is Small ribosomal subunit protein uS3 of Bartonella tribocorum (strain CIP 105476 / IBS 506).